The sequence spans 762 residues: uncharacterized protein (762 aa).

Positions 1–26 (MENLKSASPEEDSPRHGDNMGKPKRI) are disordered. Over residues 12-21 (DSPRHGDNMG) the composition is skewed to basic and acidic residues. The segment at residues 30 to 57 (CDMCRKRKIRCDGKQPACSNCVSHGIPC) is a DNA-binding region (zn(2)-C6 fungal-type). The interval 647-668 (QSHVPPRISSNHSDTSVKSNSP) is disordered.

Its subcellular location is the nucleus. This is an uncharacterized protein from Schizosaccharomyces pombe (strain 972 / ATCC 24843) (Fission yeast).